We begin with the raw amino-acid sequence, 626 residues long: Chaperone protein DnaK (626 aa).

Residue Thr197 is modified to Phosphothreonine; by autocatalysis. Positions 598-612 are enriched in low complexity; it reads AQGEQGQAAQPQAET. The tract at residues 598-626 is disordered; that stretch reads AQGEQGQAAQPQAETQGDDVQDVEFEEVK. Positions 613-626 are enriched in acidic residues; that stretch reads QGDDVQDVEFEEVK.

It belongs to the heat shock protein 70 family.

Functionally, acts as a chaperone. The polypeptide is Chaperone protein DnaK (Flavobacterium psychrophilum (strain ATCC 49511 / DSM 21280 / CIP 103535 / JIP02/86)).